A 269-amino-acid polypeptide reads, in one-letter code: Cytochrome c oxidase subunit 3 (269 aa).

The next 7 membrane-spanning stretches (helical) occupy residues 24-44 (FYNSLSLFILTTSGVLTMHGF), 46-66 (NMYIILFIAFINLVWCMTLWF), 90-110 (GVGLFIASEALFFLAIFWTFF), 132-152 (IDPFELPLLNNIILLSSGVTV), 167-187 (ALYGLVATILLAIVFTIFQGI), 207-227 (FSTGFHGFHVLIGTAFLSVGL), and 247-267 (ILYWHFVDVVWLILYVCIYFW).

The protein belongs to the cytochrome c oxidase subunit 3 family. Component of the cytochrome c oxidase (complex IV, CIV), a multisubunit enzyme composed of a catalytic core of 3 subunits and several supernumerary subunits. The complex exists as a monomer or a dimer and forms supercomplexes (SCs) in the inner mitochondrial membrane with ubiquinol-cytochrome c oxidoreductase (cytochrome b-c1 complex, complex III, CIII).

The protein localises to the mitochondrion inner membrane. It catalyses the reaction 4 Fe(II)-[cytochrome c] + O2 + 8 H(+)(in) = 4 Fe(III)-[cytochrome c] + 2 H2O + 4 H(+)(out). Functionally, component of the cytochrome c oxidase, the last enzyme in the mitochondrial electron transport chain which drives oxidative phosphorylation. The respiratory chain contains 3 multisubunit complexes succinate dehydrogenase (complex II, CII), ubiquinol-cytochrome c oxidoreductase (cytochrome b-c1 complex, complex III, CIII) and cytochrome c oxidase (complex IV, CIV), that cooperate to transfer electrons derived from NADH and succinate to molecular oxygen, creating an electrochemical gradient over the inner membrane that drives transmembrane transport and the ATP synthase. Cytochrome c oxidase is the component of the respiratory chain that catalyzes the reduction of oxygen to water. Electrons originating from reduced cytochrome c in the intermembrane space (IMS) are transferred via the dinuclear copper A center (CU(A)) of subunit 2 and heme A of subunit 1 to the active site in subunit 1, a binuclear center (BNC) formed by heme A3 and copper B (CU(B)). The BNC reduces molecular oxygen to 2 water molecules using 4 electrons from cytochrome c in the IMS and 4 protons from the mitochondrial matrix. The polypeptide is Cytochrome c oxidase subunit 3 (COXIII) (Trichophyton rubrum (Athlete's foot fungus)).